The following is a 432-amino-acid chain: Ornithine aminotransferase, mitochondrial (432 aa).

Position 287 is an N6-(pyridoxal phosphate)lysine (Lys-287).

The protein belongs to the class-III pyridoxal-phosphate-dependent aminotransferase family. In terms of assembly, homotetramer. It depends on pyridoxal 5'-phosphate as a cofactor.

It is found in the mitochondrion matrix. It catalyses the reaction a 2-oxocarboxylate + L-ornithine = L-glutamate 5-semialdehyde + an L-alpha-amino acid. It participates in amino-acid biosynthesis; L-proline biosynthesis; L-glutamate 5-semialdehyde from L-ornithine: step 1/1. This Drosophila ananassae (Fruit fly) protein is Ornithine aminotransferase, mitochondrial (Oat).